A 540-amino-acid chain; its full sequence is Putative cysteine ligase BshC (540 aa).

A coiled-coil region spans residues Glu457–Glu477.

It belongs to the BshC family.

Its function is as follows. Involved in bacillithiol (BSH) biosynthesis. May catalyze the last step of the pathway, the addition of cysteine to glucosamine malate (GlcN-Mal) to generate BSH. The chain is Putative cysteine ligase BshC from Shouchella clausii (strain KSM-K16) (Alkalihalobacillus clausii).